A 581-amino-acid polypeptide reads, in one-letter code: Tricyclene synthase Oc15, chloroplastic (581 aa).

The N-terminal 68 residues, 1-68 (MAFCISYVGA…ALCLNEHSLS (68 aa)), are a transit peptide targeting the chloroplast. N27, N206, and N319 each carry an N-linked (GlcNAc...) asparagine glycan. Mg(2+) is bound by residues D338 and D342. The DDXXD motif motif lies at 338–342 (DDIFD). N384 and N465 each carry an N-linked (GlcNAc...) asparagine glycan. Mg(2+)-binding residues include N482, S486, and E490. N-linked (GlcNAc...) asparagine glycosylation is present at N509.

It belongs to the terpene synthase family. Tpsg subfamily. It depends on Mg(2+) as a cofactor. Requires Mn(2+) as cofactor. In terms of tissue distribution, accumulates in flowers; mostly expressed in both upper and lower petal lobes, and, to a lower extent, in tube and stamens.

Its subcellular location is the plastid. It is found in the chloroplast stroma. The catalysed reaction is (2E)-geranyl diphosphate = tricyclene + diphosphate. It catalyses the reaction (2E)-geranyl diphosphate = beta-myrcene + diphosphate. It participates in secondary metabolite biosynthesis; terpenoid biosynthesis. Its function is as follows. Contributes to floral scent emission. In Antirrhinum majus (Garden snapdragon), this protein is Tricyclene synthase Oc15, chloroplastic (Oc15).